A 212-amino-acid chain; its full sequence is Peptide methionine sulfoxide reductase MsrA (212 aa).

Cys51 is an active-site residue.

The protein belongs to the MsrA Met sulfoxide reductase family.

The enzyme catalyses L-methionyl-[protein] + [thioredoxin]-disulfide + H2O = L-methionyl-(S)-S-oxide-[protein] + [thioredoxin]-dithiol. It catalyses the reaction [thioredoxin]-disulfide + L-methionine + H2O = L-methionine (S)-S-oxide + [thioredoxin]-dithiol. Has an important function as a repair enzyme for proteins that have been inactivated by oxidation. Catalyzes the reversible oxidation-reduction of methionine sulfoxide in proteins to methionine. The chain is Peptide methionine sulfoxide reductase MsrA from Vibrio parahaemolyticus serotype O3:K6 (strain RIMD 2210633).